A 156-amino-acid polypeptide reads, in one-letter code: Ribosomal RNA large subunit methyltransferase H (156 aa).

S-adenosyl-L-methionine-binding positions include Leu-73, Gly-104, and 123-128; that span reads IGPLTL.

It belongs to the RNA methyltransferase RlmH family. Homodimer.

It localises to the cytoplasm. It carries out the reaction pseudouridine(1915) in 23S rRNA + S-adenosyl-L-methionine = N(3)-methylpseudouridine(1915) in 23S rRNA + S-adenosyl-L-homocysteine + H(+). Functionally, specifically methylates the pseudouridine at position 1915 (m3Psi1915) in 23S rRNA. The sequence is that of Ribosomal RNA large subunit methyltransferase H from Xanthomonas axonopodis pv. citri (strain 306).